The sequence spans 368 residues: Probable magnesium transporter NIPA3 (368 aa).

Topologically, residues 1-18 (MASLSGSWRDAYKGMSSD) are extracellular. The helical transmembrane segment at 19 to 39 (NIKGLVLALSSSLFIGASFIV) threads the bilayer. The Cytoplasmic portion of the chain corresponds to 40–66 (KKKGLKRAGASGLRAGSGGYSYLLEPL). The helical transmembrane segment at 67–87 (WWVGMITMIVGEIANFAAYAF) threads the bilayer. Residues 88–90 (APA) lie on the Extracellular side of the membrane. A helical transmembrane segment spans residues 91–111 (ILVTPLGALSIIISAALAHVI). The Cytoplasmic portion of the chain corresponds to 112–115 (LHEK). Residues 116–136 (LHTFGLLGCVLCVVGSITIVL) traverse the membrane as a helical segment. The Extracellular portion of the chain corresponds to 137–157 (HAPQEQEIDSVLQVWNLATEP). A helical membrane pass occupies residues 158–178 (AFLLYAAAVVGAAIILIVQFV). Topologically, residues 179–189 (PQYGQSHVMVY) are cytoplasmic. The chain crosses the membrane as a helical span at residues 190 to 210 (IGVCSLVGSLSVMSVKALGIA). At 211–220 (LKLTFSGMNQ) the chain is on the extracellular side. A helical transmembrane segment spans residues 221–241 (LIYPQTWVFTLIVLTCVITQM). Topologically, residues 242–255 (NYLNKALDTFNTAV) are cytoplasmic. Residues 256–276 (VSPIYYVMFTSLTILASVIMF) form a helical membrane-spanning segment. Topologically, residues 277-283 (KDWDRQD) are extracellular. Residues 284–304 (GTQIVTELCGFVTILSGTFLL) traverse the membrane as a helical segment. Residues 305–368 (HKTKDMVDGS…ILPQDGPEAV (64 aa)) are Cytoplasmic-facing.

Belongs to the NIPA (TC 2.A.7) family. As to quaternary structure, homodimer.

It localises to the cell membrane. It is found in the early endosome. Its function is as follows. Acts as a Mg(2+) transporter. Can also transport other divalent cations such as Fe(2+), Sr(2+), Ba(2+), Mn(2+) and Co(2+) but to a much less extent than Mg(2+). In Arabidopsis thaliana (Mouse-ear cress), this protein is Probable magnesium transporter NIPA3.